The primary structure comprises 347 residues: MKPWAAFHLIFLVASSVEGDVSNYGTGGTQDTEPTCCTEHQCISDKIILQGQPGIPGIPGVPGINGSEGLKGDPGPQGLPGETGFDGIPGVAGPKGDKGDQGDKGDKGDKGDKGDACILDDCPPTDVEVRNCQDLLEHGEILNGWYTIYPTKENPMVVFCDMETDGGGWLVFQRRQDGSVDFYLDWESYKKGFGKQESEFWLGNDKIHLLTSSGTQQLRIDLEDFEGSRTFAKYSSFSIGDENEKYRLIVGSYLDGSMNDSFRIHNGHSFSTKDRDNDTNKGNCAMMYKGAWWYFHCHHANLNGLYYKGKHANYADGINWRSGKGYYYSYKYADMKIRPQQSETTVS.

A signal peptide spans Met-1–Gly-19. The Collagen-like domain maps to Gly-57–Gly-114. Positions Pro-62–Asp-115 are disordered. Residues Lys-95–Asp-115 show a composition bias toward basic and acidic residues. Positions Asp-121–Gln-341 constitute a Fibrinogen C-terminal domain. Intrachain disulfides connect Cys-132/Cys-160 and Cys-284/Cys-297.

The protein belongs to the ficolin lectin family. Veficolin subfamily. In terms of processing, hydroxylated. In terms of tissue distribution, expressed by the venom duct.

It localises to the secreted. Initiates complement activation and/or interferes in platelet aggregation and/or blood coagulation. This Cerberus rynchops (Dog-faced water snake) protein is Ryncolin-3.